A 64-amino-acid polypeptide reads, in one-letter code: Large ribosomal subunit protein bL35 (64 aa).

Positions 1-20 (MKQKTHKGTAKRIKVTGSGK) are disordered.

The protein belongs to the bacterial ribosomal protein bL35 family.

The protein is Large ribosomal subunit protein bL35 of Corynebacterium urealyticum (strain ATCC 43042 / DSM 7109).